Consider the following 928-residue polypeptide: RhoGEF domain-containing protein gxcH (928 aa).

The segment covering 30 to 48 (SKSFDNNNNNNSNTNNIKN) has biased composition (low complexity). 3 disordered regions span residues 30–76 (SKSF…PPVP), 90–201 (ITNY…PPLG), and 318–410 (DNGV…NKDT). The segment covering 93–103 (YIPTTPPSINI) has biased composition (polar residues). Residues 112 to 123 (DNYDDNYDDNYS) are compositionally biased toward acidic residues. Polar residues-rich tracts occupy residues 129–141 (TSTTPPQFNSPEF), 175–187 (ETFNDQNNNEGLQ), and 334–367 (KSGTTLDSEPNLKSVSSSNRGSFVISKSSYNLRG). Residues 377-407 (NQTTNKNNSNNNNNNTTTNNNNNNNNNNNNN) are compositionally biased toward low complexity. The region spanning 484–671 (IFNKVVKEII…GKIVSDINGK (188 aa)) is the DH domain. The segment at 699–807 (FIGEGKVKKV…NKIEDQIVSE (109 aa)) is PH-like. The disordered stretch occupies residues 835-928 (SDSQSDFVDH…NTEPENFSFY (94 aa)). Residues 848–857 (QEQQEQQQQQ) are compositionally biased toward low complexity.

Functionally, GTPase-activating protein. This Dictyostelium discoideum (Social amoeba) protein is RhoGEF domain-containing protein gxcH (gxcH).